The sequence spans 446 residues: uncharacterized protein (446 aa).

Disordered regions lie at residues 63–95 (KNKPHDLKNPKRSVSFKYKPNNSRSDLEESDLR) and 155–232 (AESS…HPVK). Residues 156-169 (ESSVPTPKLTNESN) show a composition bias toward polar residues. Composition is skewed to basic and acidic residues over residues 182–199 (DQHESRTKKSMHSTDHSA) and 213–227 (ITKESELTRNDEARK).

This is an uncharacterized protein from Mus musculus (Mouse).